The following is a 312-amino-acid chain: uncharacterized protein (312 aa).

Disordered stretches follow at residues 1–26 (MQKD…AMVA) and 45–106 (GNLQ…LPSG). The span at 8–17 (RFQRNKKKIN) shows a compositional bias: basic residues. The segment covering 68–77 (NGKRNGDKVR) has biased composition (basic and acidic residues). The span at 85–103 (GHSSYAGSRISGGNSNSHL) shows a compositional bias: polar residues.

This is an uncharacterized protein from Schizosaccharomyces pombe (strain 972 / ATCC 24843) (Fission yeast).